The sequence spans 546 residues: Cyclic GMP-AMP synthase-like receptor (546 aa).

Residues 1-10 (MPVGSRQNRV) are compositionally biased toward polar residues. Disordered regions lie at residues 1–116 (MPVG…CASR) and 134–186 (AKQE…RLTN). The segment covering 35–45 (YTERKERKDVQ) has biased composition (basic and acidic residues). A compositionally biased stretch (low complexity) spans 69 to 80 (TSRTLRQTSQSR). Composition is skewed to basic and acidic residues over residues 82–95 (EVLE…DCKK) and 145–174 (KEGY…DKAT). The span at 175 to 186 (SHSTKGSFRLTN) shows a compositional bias: polar residues. ATP is bound by residues serine 243 and 255 to 257 (EFD). 3 residues coordinate Mg(2+): glutamate 255, aspartate 257, and aspartate 374. Residues aspartate 374 and 428-435 (RTSFSLAE) each bind GTP. Residues 432–435 (SLAE), lysine 455, and 470–474 (SYHLK) each bind ATP.

Belongs to the mab-21 family. It depends on Mg(2+) as a cofactor. Mn(2+) is required as a cofactor.

The enzyme catalyses GTP + ATP = 2',3'-cGAMP + 2 diphosphate. It carries out the reaction GTP + ATP = pppGp(2'-5')A + diphosphate. The catalysed reaction is pppGp(2'-5')A = 2',3'-cGAMP + diphosphate. In terms of biological role, nucleotidyltransferase that catalyzes the formation of cyclic GMP-AMP (2',3'-cGAMP) from ATP and GTP and plays a key role in innate immunity. Directly binds some unknown ligand, activating the nucleotidyltransferase activity, leading to synthesis of 2',3'-cGAMP, a second messenger that binds to and activates Sting, thereby triggering the immune response via activation of the NF-kappa-B transcription factor. The chain is Cyclic GMP-AMP synthase-like receptor from Exaiptasia diaphana (Tropical sea anemone).